Reading from the N-terminus, the 269-residue chain is Formamidopyrimidine-DNA glycosylase (269 aa).

Pro2 acts as the Schiff-base intermediate with DNA in catalysis. The active-site Proton donor is the Glu3. Residue Lys58 is the Proton donor; for beta-elimination activity of the active site. DNA is bound by residues His91, Arg110, and Lys150. The segment at 235–269 (SVYGCENKTCHFCKSKIIKIVQNQRSTFYCRKCQT) adopts an FPG-type zinc-finger fold. Arg259 serves as the catalytic Proton donor; for delta-elimination activity.

The protein belongs to the FPG family. As to quaternary structure, monomer. It depends on Zn(2+) as a cofactor.

It carries out the reaction Hydrolysis of DNA containing ring-opened 7-methylguanine residues, releasing 2,6-diamino-4-hydroxy-5-(N-methyl)formamidopyrimidine.. The catalysed reaction is 2'-deoxyribonucleotide-(2'-deoxyribose 5'-phosphate)-2'-deoxyribonucleotide-DNA = a 3'-end 2'-deoxyribonucleotide-(2,3-dehydro-2,3-deoxyribose 5'-phosphate)-DNA + a 5'-end 5'-phospho-2'-deoxyribonucleoside-DNA + H(+). Functionally, involved in base excision repair of DNA damaged by oxidation or by mutagenic agents. Acts as a DNA glycosylase that recognizes and removes damaged bases. Has a preference for oxidized purines, such as 7,8-dihydro-8-oxoguanine (8-oxoG). Has AP (apurinic/apyrimidinic) lyase activity and introduces nicks in the DNA strand. Cleaves the DNA backbone by beta-delta elimination to generate a single-strand break at the site of the removed base with both 3'- and 5'-phosphates. This chain is Formamidopyrimidine-DNA glycosylase, found in Ruthia magnifica subsp. Calyptogena magnifica.